Consider the following 378-residue polypeptide: Spermidine/putrescine import ATP-binding protein PotA (378 aa).

The 231-residue stretch at 18–248 folds into the ABC transporter domain; the sequence is VQLAGIRKCF…PKNLFVTGFI (231 aa). Residue 50–57 coordinates ATP; it reads GPSGCGKT.

Belongs to the ABC transporter superfamily. Spermidine/putrescine importer (TC 3.A.1.11.1) family. As to quaternary structure, the complex is composed of two ATP-binding proteins (PotA), two transmembrane proteins (PotB and PotC) and a solute-binding protein (PotD).

The protein localises to the cell inner membrane. The enzyme catalyses ATP + H2O + polyamine-[polyamine-binding protein]Side 1 = ADP + phosphate + polyamineSide 2 + [polyamine-binding protein]Side 1.. Part of the ABC transporter complex PotABCD involved in spermidine/putrescine import. Responsible for energy coupling to the transport system. The sequence is that of Spermidine/putrescine import ATP-binding protein PotA from Shigella flexneri serotype 5b (strain 8401).